A 350-amino-acid chain; its full sequence is MSKNKLSKGQQRRVQANHQRRLRTDRKPELDDSQLGDAQEGIVISRFGQHADVEAVDGTQHRCNIRRTIKSLVTGDRVVWRPGLQAQEGVRVKGIVEAVHERTSVLTRPDLYDGVKPIAANIDQIVIVSAILPELSLNIIDRYLVACETLEVEPLIVLNKIDLLDADGRKFVDGMMDIYRRIGYDVLEVSSQTREGMEAFENALTGRISIFAGQSGVGKSSLLNALLPPTDNEILVNTVSGNSGLGQHTTTAARLYHFQHGGDVIDSPGVREFGLWHLAPEQITQGFVEFRDYLGHCKFRDCSHTNDPGCALREAVEQGKIAEERFDNYHRILESMEQAKPRKTSDSDEK.

Over residues 1–17 (MSKNKLSKGQQRRVQAN) the composition is skewed to polar residues. Residues 1 to 35 (MSKNKLSKGQQRRVQANHQRRLRTDRKPELDDSQL) are disordered. Positions 103 to 273 (TSVLTRPDLY…VIDSPGVREF (171 aa)) constitute a CP-type G domain. GTP is bound by residues 159–162 (NKID) and 213–221 (GQSGVGKSS). Residues Cys297, Cys302, His304, and Cys310 each contribute to the Zn(2+) site.

Belongs to the TRAFAC class YlqF/YawG GTPase family. RsgA subfamily. Monomer. Associates with 30S ribosomal subunit, binds 16S rRNA. The cofactor is Zn(2+).

The protein resides in the cytoplasm. Functionally, one of several proteins that assist in the late maturation steps of the functional core of the 30S ribosomal subunit. Helps release RbfA from mature subunits. May play a role in the assembly of ribosomal proteins into the subunit. Circularly permuted GTPase that catalyzes slow GTP hydrolysis, GTPase activity is stimulated by the 30S ribosomal subunit. The protein is Small ribosomal subunit biogenesis GTPase RsgA of Yersinia pseudotuberculosis serotype O:1b (strain IP 31758).